The primary structure comprises 196 residues: ATP-dependent Clp protease proteolytic subunit (196 aa).

The active-site Nucleophile is S101. H126 is an active-site residue.

The protein belongs to the peptidase S14 family. As to quaternary structure, component of the chloroplastic Clp protease core complex.

Its subcellular location is the plastid. It is found in the chloroplast stroma. It carries out the reaction Hydrolysis of proteins to small peptides in the presence of ATP and magnesium. alpha-casein is the usual test substrate. In the absence of ATP, only oligopeptides shorter than five residues are hydrolyzed (such as succinyl-Leu-Tyr-|-NHMec, and Leu-Tyr-Leu-|-Tyr-Trp, in which cleavage of the -Tyr-|-Leu- and -Tyr-|-Trp bonds also occurs).. Functionally, cleaves peptides in various proteins in a process that requires ATP hydrolysis. Has a chymotrypsin-like activity. Plays a major role in the degradation of misfolded proteins. The polypeptide is ATP-dependent Clp protease proteolytic subunit (Nasturtium officinale (Watercress)).